Reading from the N-terminus, the 123-residue chain is Ribosome-binding factor A (123 aa).

The protein belongs to the RbfA family. As to quaternary structure, monomer. Binds 30S ribosomal subunits, but not 50S ribosomal subunits or 70S ribosomes.

The protein localises to the cytoplasm. Its function is as follows. One of several proteins that assist in the late maturation steps of the functional core of the 30S ribosomal subunit. Associates with free 30S ribosomal subunits (but not with 30S subunits that are part of 70S ribosomes or polysomes). Required for efficient processing of 16S rRNA. May interact with the 5'-terminal helix region of 16S rRNA. This Rickettsia bellii (strain OSU 85-389) protein is Ribosome-binding factor A.